Consider the following 280-residue polypeptide: Vacuolar protein sorting-associated protein 71 (280 aa).

Over residues R64–S73 the composition is skewed to polar residues. The tract at residues R64–Q92 is disordered. A compositionally biased stretch (basic and acidic residues) spans R74 to Q92. Zn(2+) is bound by residues C244, C247, C256, C259, C264, C268, H272, and C277. The HIT-type zinc finger occupies C244–C277.

Belongs to the SWR1 complex at least composed of ACT1, ARP4, RVB1, RVB2, ARP6, YAF9, VPS71, VPS72, SWC3, SWC4, SWC5, SWR1 and HTZ1.

It localises to the nucleus. Functionally, participates in the catalytic exchange of histone H2A for the H2A variant HZT1, an euchromatin-specific factor, leading to chromatin remodeling and changes in transcription of targeted genes. Indirectly involved in vacuolar protein sorting. The polypeptide is Vacuolar protein sorting-associated protein 71 (VPS71) (Saccharomyces cerevisiae (strain ATCC 204508 / S288c) (Baker's yeast)).